The following is a 447-amino-acid chain: Nisin biosynthesis sensor protein NisK (447 aa).

The next 2 membrane-spanning stretches (helical) occupy residues 15-35 (VIEI…LTFF) and 147-167 (TYLF…YHLI). The 213-residue stretch at 235 to 447 (ALSHDVKTPL…GAEVILKIKK (213 aa)) folds into the Histidine kinase domain. Residue His-238 is modified to Phosphohistidine; by autocatalysis.

The protein resides in the cell membrane. The catalysed reaction is ATP + protein L-histidine = ADP + protein N-phospho-L-histidine.. Functionally, member of the two-component regulatory system NisK/NisR involved in the regulation of the biosynthesis of lantibiotic nisin. NisK may function as a membrane-associated protein kinase that phosphorylates NisR in response to environmental signals. The protein is Nisin biosynthesis sensor protein NisK (nisK) of Lactococcus lactis subsp. lactis (Streptococcus lactis).